Consider the following 420-residue polypeptide: tRNA(Ile)-lysidine synthase, chloroplastic (420 aa).

Residue 63–68 (SGGQDS) coordinates ATP.

This sequence belongs to the tRNA(Ile)-lysidine synthase family.

Its subcellular location is the plastid. It localises to the chloroplast. The enzyme catalyses cytidine(34) in tRNA(Ile2) + L-lysine + ATP = lysidine(34) in tRNA(Ile2) + AMP + diphosphate + H(+). Its function is as follows. Ligates lysine onto the cytidine present at position 34 of the AUA codon-specific tRNA(Ile) that contains the anticodon CAU, in an ATP-dependent manner. Cytidine is converted to lysidine, thus changing the amino acid specificity of the tRNA from methionine to isoleucine. The sequence is that of tRNA(Ile)-lysidine synthase, chloroplastic from Zygnema circumcarinatum (Green alga).